The primary structure comprises 306 residues: Aspartate carbamoyltransferase catalytic subunit (306 aa).

Residues Arg-54 and Thr-55 each contribute to the carbamoyl phosphate site. Residue Lys-83 participates in L-aspartate binding. Residues Arg-104, His-132, and Gln-135 each contribute to the carbamoyl phosphate site. L-aspartate is bound by residues Arg-165 and Arg-227. Leu-266 and Pro-267 together coordinate carbamoyl phosphate.

Belongs to the aspartate/ornithine carbamoyltransferase superfamily. ATCase family. In terms of assembly, heterododecamer (2C3:3R2) of six catalytic PyrB chains organized as two trimers (C3), and six regulatory PyrI chains organized as three dimers (R2).

The catalysed reaction is carbamoyl phosphate + L-aspartate = N-carbamoyl-L-aspartate + phosphate + H(+). It functions in the pathway pyrimidine metabolism; UMP biosynthesis via de novo pathway; (S)-dihydroorotate from bicarbonate: step 2/3. Its function is as follows. Catalyzes the condensation of carbamoyl phosphate and aspartate to form carbamoyl aspartate and inorganic phosphate, the committed step in the de novo pyrimidine nucleotide biosynthesis pathway. The protein is Aspartate carbamoyltransferase catalytic subunit of Finegoldia magna (strain ATCC 29328 / DSM 20472 / WAL 2508) (Peptostreptococcus magnus).